We begin with the raw amino-acid sequence, 515 residues long: Bifunctional purine biosynthesis protein PurH (515 aa).

One can recognise an MGS-like domain in the interval 1 to 145 (MTKRALISVS…KNHASVTVVV (145 aa)).

The protein belongs to the PurH family.

The enzyme catalyses (6R)-10-formyltetrahydrofolate + 5-amino-1-(5-phospho-beta-D-ribosyl)imidazole-4-carboxamide = 5-formamido-1-(5-phospho-D-ribosyl)imidazole-4-carboxamide + (6S)-5,6,7,8-tetrahydrofolate. It catalyses the reaction IMP + H2O = 5-formamido-1-(5-phospho-D-ribosyl)imidazole-4-carboxamide. It functions in the pathway purine metabolism; IMP biosynthesis via de novo pathway; 5-formamido-1-(5-phospho-D-ribosyl)imidazole-4-carboxamide from 5-amino-1-(5-phospho-D-ribosyl)imidazole-4-carboxamide (10-formyl THF route): step 1/1. It participates in purine metabolism; IMP biosynthesis via de novo pathway; IMP from 5-formamido-1-(5-phospho-D-ribosyl)imidazole-4-carboxamide: step 1/1. This chain is Bifunctional purine biosynthesis protein PurH, found in Streptococcus agalactiae serotype Ia (strain ATCC 27591 / A909 / CDC SS700).